We begin with the raw amino-acid sequence, 537 residues long: NEDD4-binding protein 3 (537 aa).

Residue serine 172 is modified to Phosphoserine. 3 disordered regions span residues 173-234 (LDEG…VLSC), 328-361 (KELR…EARW), and 423-458 (QEQA…REGA). Low complexity predominate over residues 178 to 207 (PEPSLSDSSSGGSFGRSPGTGPSPFSSSLG). Residues 295 to 501 (VERLHEVAQK…RVLRYQREIQ (207 aa)) adopt a coiled-coil conformation. The span at 351-361 (PNARPEEEARW) shows a compositional bias: basic and acidic residues.

It belongs to the N4BP3 family. As to quaternary structure, binds NEDD4. Interacts with 14-3-3 proteins. Interacts with MAVS.

Its subcellular location is the cytoplasmic vesicle. It is found in the cell projection. The protein localises to the axon. The protein resides in the dendrite. Functionally, plays a positive role in the antiviral innate immune signaling pathway. Mechanistically, interacts with MAVS and functions as a positive regulator to promote 'Lys-63'-linked polyubiquitination of MAVS and thus strengthens the interaction between MAVS and TRAF2. Also plays a role in axon and dendrite arborization during cranial nerve development. May also be important for neural crest migration and early development of other anterior structures including eye, brain and cranial cartilage. The protein is NEDD4-binding protein 3 (N4bp3) of Mus musculus (Mouse).